The primary structure comprises 533 residues: MFIKFYFFIIFLILNFKNNYASPTLLDSVLSSTSSLSSPGSFFIETEFCPPPLLYRYSSDLEGDKGRGYKYVEFPNGTMSHCVHPCPSLYFSDGDWTTMMDMSLIVATISFFASIFLILTYSPLMNPSYNNRHTIGILSMSFGIFLIMFTDMYNLKKRFTLGCPSETRYAIQNDADCLITGLIFQFGCVSAVFFWTALSLDLYFQITNRNISRKYDLYYFIGVNLISLIFTFVPVISKSYGYGDFALGCWILDFNYALGCFWIPLSVCLIFSTVVVLMILYEVYKIYKASNQKTSLKGHIKPLLCLISNCFEFFYVFGYSLYLATKLTELHDNMDAYIKCLFLNSQNDPDSYTCPDHRLKLGPQFLFFLSLRLLGVSGIVFYGTNSKVRKIWKNSILINNRFIGKYFSFNSGTSTPVGSKNRSKTSSQLYDNSFGDSGILEEIREYDEKVKNGIIVTPGGDDDNINNNNNNNNNNNNNNNNNNNNNNNNNNNNNNNNNNNNNNNNNNNNNSNENNENNTQEIELTNINTIDNV.

A signal peptide spans 1–21 (MFIKFYFFIIFLILNFKNNYA). Over 22–103 (SPTLLDSVLS…GDWTTMMDMS (82 aa)) the chain is Extracellular. The N-linked (GlcNAc...) asparagine glycan is linked to Asn-76. Residues 104 to 124 (LIVATISFFASIFLILTYSPL) traverse the membrane as a helical segment. Topologically, residues 125-134 (MNPSYNNRHT) are cytoplasmic. The chain crosses the membrane as a helical span at residues 135 to 155 (IGILSMSFGIFLIMFTDMYNL). Over 156-177 (KKRFTLGCPSETRYAIQNDADC) the chain is Extracellular. The chain crosses the membrane as a helical span at residues 178 to 198 (LITGLIFQFGCVSAVFFWTAL). The Cytoplasmic portion of the chain corresponds to 199–216 (SLDLYFQITNRNISRKYD). The chain crosses the membrane as a helical span at residues 217-237 (LYYFIGVNLISLIFTFVPVIS). The Extracellular segment spans residues 238-259 (KSYGYGDFALGCWILDFNYALG). Residues 260–280 (CFWIPLSVCLIFSTVVVLMIL) form a helical membrane-spanning segment. Over 281–302 (YEVYKIYKASNQKTSLKGHIKP) the chain is Cytoplasmic. A helical membrane pass occupies residues 303–323 (LLCLISNCFEFFYVFGYSLYL). Topologically, residues 324–360 (ATKLTELHDNMDAYIKCLFLNSQNDPDSYTCPDHRLK) are extracellular. The chain crosses the membrane as a helical span at residues 361 to 381 (LGPQFLFFLSLRLLGVSGIVF). The Cytoplasmic segment spans residues 382–533 (YGTNSKVRKI…LTNINTIDNV (152 aa)). A disordered region spans residues 454-533 (IIVTPGGDDD…LTNINTIDNV (80 aa)). The segment covering 466-518 (NNNNNNNNNNNNNNNNNNNNNNNNNNNNNNNNNNNNNNNNNNNNNSNENNENN) has biased composition (low complexity). The stretch at 501-528 (NNNNNNNNNNSNENNENNTQEIELTNIN) forms a coiled coil. A compositionally biased stretch (polar residues) spans 519 to 533 (TQEIELTNINTIDNV).

It belongs to the G-protein coupled receptor Fz/Smo family.

It localises to the membrane. In Dictyostelium discoideum (Social amoeba), this protein is Frizzled/smoothened-like sans CRD protein H (fscH).